The chain runs to 153 residues: Suppressor of RNA silencing (153 aa).

The interval 1 to 23 (MMATFSCVCCGTSTTSTYCGKRC) is C-1. The interval 1 to 85 (MMATFSCVCC…IVSRFCGQKH (85 aa)) is interaction with TGB1. The segment at 19 to 47 (CGKRCERKHVYSETRNKRLELYKKYLLEP) is basic motif (BM). Positions 60-85 (CGMPCSIAEEACDQLPIVSRFCGQKH) are C-2. Residues 86–127 (ADLYDSLLKRSEQELLLEFLQKKMQELKLSHIVKMAKLESEV) form an interaction with replication protein alpha-A region. A coiled-coil region spans residues 92–132 (LLKRSEQELLLEFLQKKMQELKLSHIVKMAKLESEVNAIRK). Residue serine 96 is modified to Phosphoserine.

The protein belongs to the virgaviridae suppressor of RNA silencing family. As to quaternary structure, homooligomer. Interacts (via C-terminus) with replication protein alpha-A. Interacts (via N-terminus) with the movement protein TGB1; this interaction targets gammab-TGB1 at the periphery of chloroplasts and plasmodesmata. Interacts with host autophagy protein ATG7; this interaction disrupts the host ATG7-ATG8 interaction to promote viral infection. Interacts (via BM region) with host STY46; this interaction inhibits the viral infection. In terms of processing, phosphorylated at Ser-96 by a host PKA-like kinase; the phosphorylation at this site seems to suppress host cell death. Post-translationally, serine-phosphorylated by host STY46 kinase.

The protein resides in the host chloroplast envelope. Its subcellular location is the host endoplasmic reticulum. It is found in the host cell junction. The protein localises to the host plasmodesma. Functionally, suppressor of RNA-mediated gene silencing, also known as post-transcriptional gene silencing (PTGS), a mechanism of plant viral defense that limits the accumulation of viral RNAs. Promotes viral cell-to-cell long distance movement by enhancing the ATPase activity of TGB1. Enhances RNA helicase activity of replication protein alpha-A. Suppresses autophagy induced by the host as a defense mechanism against viral infection. The protein is Suppressor of RNA silencing of Barley stripe mosaic virus (BSMV).